We begin with the raw amino-acid sequence, 65 residues long: Large ribosomal subunit protein bL35 (65 aa).

The segment at Ala-30–Met-65 is disordered. Positions Thr-56–Met-65 are enriched in basic and acidic residues.

It belongs to the bacterial ribosomal protein bL35 family.

This Mycoplasma mobile (strain ATCC 43663 / 163K / NCTC 11711) (Mesomycoplasma mobile) protein is Large ribosomal subunit protein bL35.